We begin with the raw amino-acid sequence, 449 residues long: Probable glycine dehydrogenase (decarboxylating) subunit 1 (449 aa).

The protein belongs to the GcvP family. N-terminal subunit subfamily. In terms of assembly, the glycine cleavage system is composed of four proteins: P, T, L and H. In this organism, the P 'protein' is a heterodimer of two subunits.

The enzyme catalyses N(6)-[(R)-lipoyl]-L-lysyl-[glycine-cleavage complex H protein] + glycine + H(+) = N(6)-[(R)-S(8)-aminomethyldihydrolipoyl]-L-lysyl-[glycine-cleavage complex H protein] + CO2. Its function is as follows. The glycine cleavage system catalyzes the degradation of glycine. The P protein binds the alpha-amino group of glycine through its pyridoxal phosphate cofactor; CO(2) is released and the remaining methylamine moiety is then transferred to the lipoamide cofactor of the H protein. The polypeptide is Probable glycine dehydrogenase (decarboxylating) subunit 1 (Pyrococcus horikoshii (strain ATCC 700860 / DSM 12428 / JCM 9974 / NBRC 100139 / OT-3)).